A 131-amino-acid chain; its full sequence is Small ribosomal subunit protein uS9 (131 aa).

This sequence belongs to the universal ribosomal protein uS9 family.

This chain is Small ribosomal subunit protein uS9, found in Actinobacillus pleuropneumoniae serotype 5b (strain L20).